We begin with the raw amino-acid sequence, 37 residues long: Esculentin-2A (37 aa).

Cysteines 31 and 37 form a disulfide.

It belongs to the frog skin active peptide (FSAP) family. Esculentin subfamily. As to expression, expressed by the skin glands.

Its subcellular location is the secreted. Shows antibacterial activity against representative Gram-negative and Gram-positive bacterial species, and hemolytic activity. This is Esculentin-2A from Pelophylax lessonae (Pool frog).